The primary structure comprises 166 residues: Probable chemoreceptor glutamine deamidase CheD 1 (166 aa).

It belongs to the CheD family.

The enzyme catalyses L-glutaminyl-[protein] + H2O = L-glutamyl-[protein] + NH4(+). Functionally, probably deamidates glutamine residues to glutamate on methyl-accepting chemotaxis receptors (MCPs), playing an important role in chemotaxis. This is Probable chemoreceptor glutamine deamidase CheD 1 from Leptospira interrogans serogroup Icterohaemorrhagiae serovar copenhageni (strain Fiocruz L1-130).